Consider the following 227-residue polypeptide: Testis expressed protein 56 (227 aa).

In terms of tissue distribution, expressed predominantly in the testis.

In Mus musculus (Mouse), this protein is Testis expressed protein 56.